The following is a 475-amino-acid chain: PRAME family member 20 (475 aa).

The stretch at 97-124 (RWKLQVLDLQDVSENFWMVWSEAMARRC) is one LRR 1; degenerate repeat. The LRR 2; degenerate repeat unit spans residues 179–203 (HLCCKKLKMLGMLFHNIRNILKTVN). An LRR 3; degenerate repeat occupies 204–230 (LDCIQEVEVNCNWTLPVLAEFTPYLGQ). An LRR 4; degenerate repeat occupies 231-265 (MRNLRKLVLSDIDSRYISPEQKKEFVTQFTTQFLK). LRR repeat units lie at residues 266–291 (LRCLQKLYMNSVSFLEGHLDQMLSCL), 292–323 (KTSLNILAITNCVLLESDLKHLSKYPSIGQLK), 324–342 (TLDLSGTRLANFSLVPLQV), 348–375 (AATLEYLDLDDCGIVDSQVNAILPALSR), and 376–400 (CFELTTFSFRGNPISTATLENLLCH).

The protein belongs to the PRAME family.

This Homo sapiens (Human) protein is PRAME family member 20.